The chain runs to 945 residues: Leucine--tRNA ligase (945 aa).

Residues 66–77 (PYPSGTGLHVGH) carry the 'HIGH' region motif. The short motif at 716-720 (KMGKS) is the 'KMSKS' region element. Residue K719 coordinates ATP.

The protein belongs to the class-I aminoacyl-tRNA synthetase family.

Its subcellular location is the cytoplasm. The enzyme catalyses tRNA(Leu) + L-leucine + ATP = L-leucyl-tRNA(Leu) + AMP + diphosphate. The chain is Leucine--tRNA ligase from Rhodococcus jostii (strain RHA1).